A 356-amino-acid polypeptide reads, in one-letter code: Probable arabinogalactan endo-beta-1,4-galactanase A (356 aa).

Positions 1–21 are cleaved as a signal peptide; the sequence is MLGKMILLPLFVLLCHSLASA. The N-linked (GlcNAc...) asparagine glycan is linked to N133. The active-site Proton donor is the E157. Catalysis depends on E268, which acts as the Nucleophile.

This sequence belongs to the glycosyl hydrolase 53 family.

The protein resides in the secreted. It carries out the reaction The enzyme specifically hydrolyzes (1-&gt;4)-beta-D-galactosidic linkages in type I arabinogalactans.. Endogalactanase involved in the degradation of plant cell wall polysaccharides, and more particularly of hairy regions of pectin. The chain is Probable arabinogalactan endo-beta-1,4-galactanase A (galA) from Neosartorya fischeri (strain ATCC 1020 / DSM 3700 / CBS 544.65 / FGSC A1164 / JCM 1740 / NRRL 181 / WB 181) (Aspergillus fischerianus).